The chain runs to 425 residues: Metacaspase-1 (425 aa).

Residues 1–110 form a disordered region; it reads MSYNSNPYNG…PQLPNTQTQS (110 aa). The span at 13–28 shows a compositional bias: low complexity; sequence YPPYNTYTRPNYSPNN. Polar residues-rich tracts occupy residues 29-38 and 88-110; these read GSQSNNTVHQ and TGAN…QTQS. Active-site residues include His-214 and Cys-270.

Belongs to the peptidase C14B family.

Its subcellular location is the cytoplasm. The protein localises to the nucleus. Functionally, involved in cell death (apoptosis). This is Metacaspase-1 (pca1) from Schizosaccharomyces pombe (strain 972 / ATCC 24843) (Fission yeast).